The following is a 314-amino-acid chain: THAP domain-containing protein 11 (314 aa).

The THAP-type zinc finger occupies 1–80 (MPGFTCCVPG…TYTVRVPTIF (80 aa)). The disordered stretch occupies residues 85 to 111 (VNERKVARRPAGAAAARRRQQQQQQQQ). The segment covering 93 to 111 (RPAGAAAARRRQQQQQQQQ) has biased composition (low complexity). The short motif at 243–246 (DHSY) is the HCFC1-binding motif (HBM) element. A coiled-coil region spans residues 255 to 305 (EELLRKLNEQRDILALMEVKMKEMKGSIRHLRLTEAKLREELREKDRLLAM).

This sequence belongs to the THAP11 family. Forms homodimers. Interacts via HBM with HCFC1. Forms a complex with HCFC1 and ZNF143. Expressed in skin fibroblasts.

It localises to the nucleus. Its subcellular location is the cytoplasm. Transcription factor, which has both transcriptional activation and repression activities. Also modulates chromatin accessibility. In complex with HCFC1 and ZNF143, regulates the expression of several genes, including AP2S1, ESCO2, OPHN1, RBL1, UBXN8 and ZNF32. May regulate the expression of genes that encode both cytoplasmic and mitochondrial ribosomal proteins. Required for normal mitochondrial development and function. Regulates mitochondrial gene expression, including that of components of the electron transport chain. Involved in the maintainance of pluripotency in early embryonic cells, possibly through its action on mitochondrial maturation which is required to meet high energy demands of these cells. Required for early development of retina, preventing premature exit of retinal progenitor cells from the cell cycle. This effect may also be mediated by its action on mitochondria. Through the regulation of MMACHC gene expression, controls cobalamin metabolism. Required for normal brain development and neural precursor differentiation. Involved in cell growth. The sequence is that of THAP domain-containing protein 11 (THAP11) from Homo sapiens (Human).